The chain runs to 334 residues: MDLVRFGIIGTAAIAVEKVIPSMLSAEGLEVVAIASRDLDRARAAATRFGIGRSYGSYDEILADPEIEAVYIPLPNHLHVHWAIRAAEAGKHVLCEKPLALDVEELSRLIDCRDRTGRRIQEAVMIRAHPQWDEIFDIVASGEIGEVRAIQGVFTEVNLDPKSIVNDASIGGGALYDLGVYPIAAARMVFAAEPERVFAVSDLDPVFGIDRLTSAVLLFPGGRQATLVVSTQLALRHNVEIFGTRKSISLKNPFNPTPDDHCRIVLDNGSKLAAAAAETRRVAPADQYRLQAERFSAAIRSGSPLPIELEWSLGTMKVLNAIQRSAERGNWETV.

Belongs to the Gfo/Idh/MocA family.

This is an uncharacterized protein from Rhizobium meliloti (Ensifer meliloti).